Here is a 130-residue protein sequence, read N- to C-terminus: Small ribosomal subunit protein uS9 (130 aa).

This sequence belongs to the universal ribosomal protein uS9 family.

The sequence is that of Small ribosomal subunit protein uS9 from Enterococcus faecalis (strain ATCC 700802 / V583).